We begin with the raw amino-acid sequence, 325 residues long: Beta-lactamase 1 (325 aa).

The N-terminal stretch at M1–G26 is a signal peptide. Residues G30 to A50 form a disordered region. The active-site Acyl-ester intermediate is S93. Position 270–272 (K270–G272) interacts with substrate.

The protein belongs to the class-A beta-lactamase family.

It catalyses the reaction a beta-lactam + H2O = a substituted beta-amino acid. The polypeptide is Beta-lactamase 1 (blaL) (Streptomyces cacaoi).